Here is a 141-residue protein sequence, read N- to C-terminus: Nucleoside diphosphate kinase (141 aa).

6 residues coordinate ATP: Lys11, Phe59, Arg87, Thr93, Arg104, and Asn114. His117 functions as the Pros-phosphohistidine intermediate in the catalytic mechanism.

The protein belongs to the NDK family. As to quaternary structure, homotetramer. Mg(2+) serves as cofactor.

Its subcellular location is the cytoplasm. The catalysed reaction is a 2'-deoxyribonucleoside 5'-diphosphate + ATP = a 2'-deoxyribonucleoside 5'-triphosphate + ADP. It catalyses the reaction a ribonucleoside 5'-diphosphate + ATP = a ribonucleoside 5'-triphosphate + ADP. Major role in the synthesis of nucleoside triphosphates other than ATP. The ATP gamma phosphate is transferred to the NDP beta phosphate via a ping-pong mechanism, using a phosphorylated active-site intermediate. In Neisseria gonorrhoeae (strain NCCP11945), this protein is Nucleoside diphosphate kinase.